The following is an 85-amino-acid chain: Conotoxin Vx15a (85 aa).

The signal sequence occupies residues 1–23; that stretch reads MEKLTVLILVATVLLTIQVLAQS. Residues 24–49 constitute a propeptide that is removed on maturation; sequence DGDKHLMKRSKQYATKRLSALMRGHR. Residue Gln50 is modified to Pyrrolidone carboxylic acid.

The protein belongs to the conotoxin O2 superfamily. Contains 4 disulfide bonds. Expressed by the venom duct.

The protein resides in the secreted. The polypeptide is Conotoxin Vx15a (Conus vexillum (Flag cone)).